A 3681-amino-acid polypeptide reads, in one-letter code: E3 ubiquitin-protein ligase UPL1 (3681 aa).

The segment covering 882 to 891 has biased composition (basic and acidic residues); that stretch reads DEKKSVDRGS. Positions 882-912 are disordered; sequence DEKKSVDRGSDNSVSASSSTAERESDEDSSN. Over residues 892–901 the composition is skewed to low complexity; that stretch reads DNSVSASSST. Residues 1269-1310 form the UBA domain; sequence QLDESIVGMIVEMGFSRSRAEIALRRVGTNSVEMAMDWLFTN. The UIM domain maps to 1316 to 1335; it reads QEDDELAQALALSLGNSSET. 10 disordered regions span residues 1332 to 1358, 1768 to 1802, 2015 to 2094, 2125 to 2151, 2253 to 2287, 2401 to 2435, 2483 to 2505, 2537 to 2606, 2975 to 3003, and 3228 to 3254; these read SSET…KEPP, MEVD…KAEI, EQLK…MRIE, ENRA…EDAD, RQTG…TASV, NTTE…QSEE, PLPL…DGAP, IAPP…APEV, SPSS…DAES, and TAGE…KTDG. Composition is skewed to basic and acidic residues over residues 1336-1345, 1782-1802, and 2017-2037; these read PKLEDTEKPV, KVGE…KAEI, and LKSE…HDSH. A compositionally biased stretch (polar residues) spans 2038–2087; sequence GNSTETEADELNQNNSSLQQVTDAAGNGQEQAQVSSQSAGERGSSQTQAM. A compositionally biased stretch (acidic residues) spans 2130-2151; it reads DDVDDDMGDEGEDDEGDDEDAD. Over residues 2253-2265 the composition is skewed to basic and acidic residues; the sequence is RQTGRSSLDRSGS. Positions 2277-2287 are enriched in polar residues; sequence RPSQTGNTASV. A Phosphoserine modification is found at Ser-2598. Over residues 2982 to 3002 the composition is skewed to basic and acidic residues; the sequence is EKLENKPVGEEASSETRKDAE. Polar residues predominate over residues 3237 to 3247; sequence AHGSSSKTSVD. Positions 3340 to 3681 constitute an HECT domain; the sequence is SPQDLKGRLN…HEASEGFGFA (342 aa). The Glycyl thioester intermediate role is filled by Cys-3648.

This sequence belongs to the UPL family. TOM1/PTR1 subfamily. As to expression, widely expressed. Expressed in root, stem, cauline and rosette leaf, seedling and flower (at protein level).

The catalysed reaction is S-ubiquitinyl-[E2 ubiquitin-conjugating enzyme]-L-cysteine + [acceptor protein]-L-lysine = [E2 ubiquitin-conjugating enzyme]-L-cysteine + N(6)-ubiquitinyl-[acceptor protein]-L-lysine.. Its pathway is protein modification; protein ubiquitination. Functionally, probable E3 ubiquitin-protein ligase which mediates ubiquitination and subsequent proteasomal degradation of target proteins. The polypeptide is E3 ubiquitin-protein ligase UPL1 (UPL1) (Arabidopsis thaliana (Mouse-ear cress)).